We begin with the raw amino-acid sequence, 950 residues long: Translation initiation factor IF-2 (950 aa).

4 stretches are compositionally biased toward basic and acidic residues: residues 128–156, 165–186, 200–234, and 291–312; these read KPKV…KVEA, AEVK…EKKK, KRAE…DNRR, and NRRD…DGNR. Residues 128-352 form a disordered region; that stretch reads KPKVAEPVKK…YQNNQSSNVP (225 aa). Polar residues-rich tracts occupy residues 322 to 336 and 343 to 352; these read NRNQ…NWNQ and YQNNQSSNVP. Residues 448-619 enclose the tr-type G domain; it reads ERPAVVTIMG…LLVAEVQELK (172 aa). The segment at 457–464 is G1; that stretch reads GHVDHGKT. Position 457–464 (457–464) interacts with GTP; it reads GHVDHGKT. The interval 482-486 is G2; sequence GITQH. The interval 503 to 506 is G3; it reads DTPG. Residues 503–507 and 557–560 each bind GTP; these read DTPGH and NKLD. The tract at residues 557 to 560 is G4; it reads NKLD. A G5 region spans residues 595–597; it reads SAK.

Belongs to the TRAFAC class translation factor GTPase superfamily. Classic translation factor GTPase family. IF-2 subfamily.

Its subcellular location is the cytoplasm. Functionally, one of the essential components for the initiation of protein synthesis. Protects formylmethionyl-tRNA from spontaneous hydrolysis and promotes its binding to the 30S ribosomal subunits. Also involved in the hydrolysis of GTP during the formation of the 70S ribosomal complex. This Lactococcus lactis subsp. cremoris (Streptococcus cremoris) protein is Translation initiation factor IF-2 (infB).